Reading from the N-terminus, the 680-residue chain is DNA-directed RNA polymerase subunit beta' (680 aa).

Residues C69, C71, C87, and C90 each coordinate Zn(2+). Mg(2+)-binding residues include D489, D491, and D493.

It belongs to the RNA polymerase beta' chain family. RpoC1 subfamily. In terms of assembly, in plastids the minimal PEP RNA polymerase catalytic core is composed of four subunits: alpha, beta, beta', and beta''. When a (nuclear-encoded) sigma factor is associated with the core the holoenzyme is formed, which can initiate transcription. Mg(2+) serves as cofactor. Requires Zn(2+) as cofactor.

Its subcellular location is the plastid. The protein localises to the chloroplast. It catalyses the reaction RNA(n) + a ribonucleoside 5'-triphosphate = RNA(n+1) + diphosphate. Its function is as follows. DNA-dependent RNA polymerase catalyzes the transcription of DNA into RNA using the four ribonucleoside triphosphates as substrates. This chain is DNA-directed RNA polymerase subunit beta', found in Barbarea verna (Land cress).